We begin with the raw amino-acid sequence, 181 residues long: LEM domain-containing protein 1 (181 aa).

Residues Met-1–Pro-45 enclose the LEM domain. The chain crosses the membrane as a helical; Signal-anchor for type II membrane protein span at residues Phe-152–Leu-172.

Testis-specific. Isoform 6 is detected in 17 of 18 colon cancer tissues examined.

It is found in the membrane. In Homo sapiens (Human), this protein is LEM domain-containing protein 1 (LEMD1).